The following is a 246-amino-acid chain: Putative outer membrane protein YiaT (246 aa).

The signal sequence occupies residues 1–21; the sequence is MLINRNIVALFALPFMASATA.

The protein belongs to the MipA/OmpV family.

The protein resides in the cell outer membrane. The chain is Putative outer membrane protein YiaT (yiaT) from Escherichia coli O157:H7.